The primary structure comprises 186 residues: FMN-dependent NADH:quinone oxidoreductase 1 (186 aa).

Residues 15 to 17 (SVS) and 81 to 84 (MYNF) contribute to the FMN site.

It belongs to the azoreductase type 1 family. Homodimer. FMN is required as a cofactor.

The catalysed reaction is 2 a quinone + NADH + H(+) = 2 a 1,4-benzosemiquinone + NAD(+). The enzyme catalyses N,N-dimethyl-1,4-phenylenediamine + anthranilate + 2 NAD(+) = 2-(4-dimethylaminophenyl)diazenylbenzoate + 2 NADH + 2 H(+). Quinone reductase that provides resistance to thiol-specific stress caused by electrophilic quinones. Functionally, also exhibits azoreductase activity. Catalyzes the reductive cleavage of the azo bond in aromatic azo compounds to the corresponding amines. This chain is FMN-dependent NADH:quinone oxidoreductase 1, found in Idiomarina loihiensis (strain ATCC BAA-735 / DSM 15497 / L2-TR).